Consider the following 695-residue polypeptide: RING finger protein 145 (695 aa).

A run of 13 helical transmembrane segments spans residues 53–73, 77–97, 123–143, 146–166, 168–188, 225–245, 275–295, 316–336, 340–360, 384–404, 410–430, 460–480, and 482–502; these read YLAL…LTLP, LAKL…HQIS, FITA…VMKT, IWLF…IPIE, IVVI…YFLA, LVVP…QIYT, YSLL…LTLC, TEGV…LQVV, FLLS…MLEI, SLCL…CQFF, LLII…TLFV, LLEF…TVFG, and WTVM…WLRA. The RING-type; atypical zinc finger occupies 537–575; it reads CSICYQDMNSAVITPCSHFFHPGCLKKWLYVQETCPLCH. Positions 589–604 are enriched in polar residues; it reads SGSSTNPVVEQSANNP. Residues 589–608 are disordered; it reads SGSSTNPVVEQSANNPPQEP.

The protein localises to the membrane. The protein is RING finger protein 145 (rnf145) of Xenopus laevis (African clawed frog).